The primary structure comprises 419 residues: Zinc finger protein Pegasus (419 aa).

Residue Lys5 forms a Glycyl lysine isopeptide (Lys-Gly) (interchain with G-Cter in SUMO2) linkage. C2H2-type zinc fingers lie at residues Leu82–His104, His110–His132, and Tyr138–His161. Lys185 is covalently cross-linked (Glycyl lysine isopeptide (Lys-Gly) (interchain with G-Cter in SUMO2)). Polar residues-rich tracts occupy residues Gln223–Thr236 and Leu262–Ala273. Disordered regions lie at residues Gln223–Met247 and Leu262–Pro356. Residues Gln290–Thr311 are compositionally biased toward low complexity. Over residues Ser332 to Ser349 the composition is skewed to polar residues. C2H2-type zinc fingers lie at residues His364–His386 and Phe392–His416.

It belongs to the Ikaros C2H2-type zinc-finger protein family. As to quaternary structure, self-associates. Interacts with other family members; IKZF1, IKZF2, IKZF3 and IKZF4. As to expression, expressed in brain, heart, skeletal muscle, kidney, and liver. Expressed in the hematopoietic cell lines MOLT-4, NALM-6 and K-562. Highly expressed in THP-1 and M-07e cell lines, which have characteristics of myeloid and early megakaryocytic cells respectively.

It is found in the nucleus. Transcriptional repressor that binds the core 5'GNNTGTNG-3' DNA consensus sequence. Involved in megakaryocyte differentiation. The chain is Zinc finger protein Pegasus (IKZF5) from Homo sapiens (Human).